The sequence spans 314 residues: Acetyl-coenzyme A carboxylase carboxyl transferase subunit beta, chloroplastic (314 aa).

Residues 47 to 314 (LWTRCDNCEN…APWKEKNNQV (268 aa)) enclose the CoA carboxyltransferase N-terminal domain. C51, C54, C70, and C73 together coordinate Zn(2+). The C4-type zinc finger occupies 51–73 (CDNCENMLYIKFLKQNKGVCEEC).

The protein belongs to the AccD/PCCB family. Acetyl-CoA carboxylase is a heterohexamer composed of biotin carboxyl carrier protein, biotin carboxylase and 2 subunits each of ACCase subunit alpha and ACCase plastid-coded subunit beta (accD). It depends on Zn(2+) as a cofactor.

It is found in the plastid. The protein resides in the chloroplast stroma. It catalyses the reaction N(6)-carboxybiotinyl-L-lysyl-[protein] + acetyl-CoA = N(6)-biotinyl-L-lysyl-[protein] + malonyl-CoA. It functions in the pathway lipid metabolism; malonyl-CoA biosynthesis; malonyl-CoA from acetyl-CoA: step 1/1. In terms of biological role, component of the acetyl coenzyme A carboxylase (ACC) complex. Biotin carboxylase (BC) catalyzes the carboxylation of biotin on its carrier protein (BCCP) and then the CO(2) group is transferred by the transcarboxylase to acetyl-CoA to form malonyl-CoA. The protein is Acetyl-coenzyme A carboxylase carboxyl transferase subunit beta, chloroplastic of Angiopteris lygodiifolia (Turnip fern).